Consider the following 239-residue polypeptide: Uridylate kinase (239 aa).

13–16 is a binding site for ATP; sequence KLSG. G55 serves as a coordination point for UMP. ATP is bound by residues G56 and R60. UMP is bound by residues D75 and 136-143; that span reads TGNPFFTT. ATP-binding residues include T163, N164, Y169, and D172.

The protein belongs to the UMP kinase family. In terms of assembly, homohexamer.

The protein resides in the cytoplasm. It carries out the reaction UMP + ATP = UDP + ADP. It functions in the pathway pyrimidine metabolism; CTP biosynthesis via de novo pathway; UDP from UMP (UMPK route): step 1/1. With respect to regulation, inhibited by UTP. In terms of biological role, catalyzes the reversible phosphorylation of UMP to UDP. The protein is Uridylate kinase of Neisseria gonorrhoeae (strain ATCC 700825 / FA 1090).